The following is a 588-amino-acid chain: Probable metalloprotease ARX1 (588 aa).

Belongs to the peptidase M24 family. In terms of assembly, component of the nucleoplasmic and cytoplasmic pre-60S ribosomal particles.

It is found in the cytoplasm. It localises to the nucleus. Functionally, probable metalloprotease involved in proper assembly of pre-ribosomal particles during the biogenesis of the 60S ribosomal subunit. Accompanies the pre-60S particles to the cytoplasm. This is Probable metalloprotease ARX1 (ARX1) from Candida glabrata (strain ATCC 2001 / BCRC 20586 / JCM 3761 / NBRC 0622 / NRRL Y-65 / CBS 138) (Yeast).